Reading from the N-terminus, the 247-residue chain is MNLLLILTFVAAAVAAPFDDDDKIVGGYICEENSVPYQVSLNSGYHFCGGSLISEQWVVSAGHCYKSRIQVRLGEHNIEVLEGNEQFINAAKIIRHPKYNSRTLDNDILLIKLSSPAVINSRVSAISLPTAPPAAGTESLISGWGNTLSSGADYPDELQCLDAPVLSQAECEASYPGKITNNMFCVGFLEGGKDSCQGDSGGPVVSNGELQGIVSWGYGCAQKNRPGVYTKVYNYVDWIKDTIAANS.

An N-terminal signal peptide occupies residues 1–15 (MNLLLILTFVAAAVA). A propeptide spans 16–23 (APFDDDDK) (activation peptide). The 221-residue stretch at 24-244 (IVGGYICEEN…YVDWIKDTIA (221 aa)) folds into the Peptidase S1 domain. 4 disulfides stabilise this stretch: Cys-30–Cys-160, Cys-48–Cys-64, Cys-171–Cys-185, and Cys-196–Cys-220. His-63 serves as the catalytic Charge relay system. Ca(2+) is bound by residues Glu-75, Asn-77, Val-80, and Glu-85. The Charge relay system role is filled by Asp-107. Tyr-154 carries the sulfotyrosine modification. The Charge relay system role is filled by Ser-200.

This sequence belongs to the peptidase S1 family. The cofactor is Ca(2+). Post-translationally, sulfated on tyrosine. Sulfation at Tyr-154 increases selectivity towards basic versus apolar residues at the P2' position of inhibitors that bind in a substrate-like fashion. Although the increase in selectivity is relatively small, it may facilitate digestion of a broader range of dietary proteins. Expressed in Paneth cells, at the base of small intestinal crypts.

The protein resides in the secreted. It is found in the extracellular space. It catalyses the reaction Preferential cleavage: Arg-|-Xaa, Lys-|-Xaa.. Functionally, in the ileum, may be involved in defensin processing, including DEFA5. In Homo sapiens (Human), this protein is Trypsin-2 (PRSS2).